The following is a 514-amino-acid chain: ATP synthase subunit alpha (514 aa).

170-177 lines the ATP pocket; the sequence is GDRQIGKS.

This sequence belongs to the ATPase alpha/beta chains family. In terms of assembly, F-type ATPases have 2 components, CF(1) - the catalytic core - and CF(0) - the membrane proton channel. CF(1) has five subunits: alpha(3), beta(3), gamma(1), delta(1), epsilon(1). CF(0) has three main subunits: a(1), b(2) and c(9-12). The alpha and beta chains form an alternating ring which encloses part of the gamma chain. CF(1) is attached to CF(0) by a central stalk formed by the gamma and epsilon chains, while a peripheral stalk is formed by the delta and b chains.

The protein resides in the cell inner membrane. The catalysed reaction is ATP + H2O + 4 H(+)(in) = ADP + phosphate + 5 H(+)(out). Its function is as follows. Produces ATP from ADP in the presence of a proton gradient across the membrane. The alpha chain is a regulatory subunit. This chain is ATP synthase subunit alpha, found in Chromohalobacter salexigens (strain ATCC BAA-138 / DSM 3043 / CIP 106854 / NCIMB 13768 / 1H11).